Here is a 764-residue protein sequence, read N- to C-terminus: 5-methyltetrahydropteroyltriglutamate--homocysteine methyltransferase (764 aa).

Residues 16-19 (RELK) and Lys-115 each bind 5-methyltetrahydropteroyltri-L-glutamate. L-homocysteine-binding positions include 435 to 437 (IGS) and Glu-488. Residues 435–437 (IGS) and Glu-488 each bind L-methionine. Residues 519–520 (RC) and Trp-565 each bind 5-methyltetrahydropteroyltri-L-glutamate. Asp-603 serves as a coordination point for L-homocysteine. Residue Asp-603 coordinates L-methionine. Glu-609 serves as a coordination point for 5-methyltetrahydropteroyltri-L-glutamate. Residues His-645, Cys-647, and Glu-669 each contribute to the Zn(2+) site. His-698 (proton donor) is an active-site residue. Zn(2+) is bound at residue Cys-730.

The protein belongs to the vitamin-B12 independent methionine synthase family. Zn(2+) is required as a cofactor.

The enzyme catalyses 5-methyltetrahydropteroyltri-L-glutamate + L-homocysteine = tetrahydropteroyltri-L-glutamate + L-methionine. Its pathway is amino-acid biosynthesis; L-methionine biosynthesis via de novo pathway; L-methionine from L-homocysteine (MetE route): step 1/1. Catalyzes the transfer of a methyl group from 5-methyltetrahydrofolate to homocysteine resulting in methionine formation. The chain is 5-methyltetrahydropteroyltriglutamate--homocysteine methyltransferase from Burkholderia mallei (strain NCTC 10247).